The chain runs to 336 residues: Adenylate isopentenyltransferase 3, chloroplastic (336 aa).

The transit peptide at 1–55 (MIMKISMAMCKQPLPPSPTLDFPPARFGPNMLTLNPYGPKDKVVVIMGATGTGKS) directs the protein to the chloroplast. Residue 48-55 (GATGTGKS) participates in ATP binding. C333 bears the Cysteine methyl ester mark. C333 is lipidated: S-farnesyl cysteine. Positions 334-336 (LVA) are cleaved as a propeptide — removed in mature form.

The protein belongs to the IPP transferase family. Farnesylated. Expressed the phloem companion cells.

The protein localises to the plastid. It localises to the chloroplast. It is found in the nucleus membrane. Its subcellular location is the cytoplasm. It carries out the reaction dimethylallyl diphosphate + ADP = N(6)-(dimethylallyl)adenosine 5'-diphosphate + diphosphate. The catalysed reaction is dimethylallyl diphosphate + ATP = N(6)-(dimethylallyl)adenosine 5'-triphosphate + diphosphate. Involved in cytokinin biosynthesis. Catalyzes the transfer of an isopentenyl group from dimethylallyl diphosphate (DMAPP) to ATP and ADP. In Arabidopsis thaliana (Mouse-ear cress), this protein is Adenylate isopentenyltransferase 3, chloroplastic (IPT3).